A 235-amino-acid polypeptide reads, in one-letter code: Large ribosomal subunit protein uL1 (235 aa).

The protein belongs to the universal ribosomal protein uL1 family. In terms of assembly, part of the 50S ribosomal subunit.

Its function is as follows. Binds directly to 23S rRNA. The L1 stalk is quite mobile in the ribosome, and is involved in E site tRNA release. Protein L1 is also a translational repressor protein, it controls the translation of the L11 operon by binding to its mRNA. This is Large ribosomal subunit protein uL1 from Lawsonia intracellularis (strain PHE/MN1-00).